We begin with the raw amino-acid sequence, 209 residues long: Small ribosomal subunit protein uS4 (209 aa).

The Zn(2+) site is built by Cys9, Cys12, Cys26, and Cys31. A C4-type zinc finger spans residues 9 to 31 (CKLCRREGMKLYLKGERCYTDKC). An S4 RNA-binding domain is found at 98-161 (ARLDNVVYRM…RDLEVIKKAI (64 aa)).

Belongs to the universal ribosomal protein uS4 family. In terms of assembly, part of the 30S ribosomal subunit. Contacts protein S5. The interaction surface between S4 and S5 is involved in control of translational fidelity. Zn(2+) serves as cofactor.

In terms of biological role, one of the primary rRNA binding proteins, it binds directly to 16S rRNA where it nucleates assembly of the body of the 30S subunit. Functionally, with S5 and S12 plays an important role in translational accuracy. In Thermotoga maritima (strain ATCC 43589 / DSM 3109 / JCM 10099 / NBRC 100826 / MSB8), this protein is Small ribosomal subunit protein uS4 (rpsD).